A 116-amino-acid polypeptide reads, in one-letter code: Peptidyl-tRNA hydrolase (116 aa).

Belongs to the PTH2 family.

Its subcellular location is the cytoplasm. The catalysed reaction is an N-acyl-L-alpha-aminoacyl-tRNA + H2O = an N-acyl-L-amino acid + a tRNA + H(+). Functionally, the natural substrate for this enzyme may be peptidyl-tRNAs which drop off the ribosome during protein synthesis. The sequence is that of Peptidyl-tRNA hydrolase from Methanococcus maripaludis (strain C7 / ATCC BAA-1331).